The sequence spans 121 residues: Large ribosomal subunit protein uL22c (121 aa).

The protein belongs to the universal ribosomal protein uL22 family. As to quaternary structure, part of the 50S ribosomal subunit.

It localises to the plastid. The protein resides in the chloroplast. This protein binds specifically to 23S rRNA. Its function is as follows. The globular domain of the protein is located near the polypeptide exit tunnel on the outside of the subunit, while an extended beta-hairpin is found that lines the wall of the exit tunnel in the center of the 70S ribosome. The sequence is that of Large ribosomal subunit protein uL22c (rpl22) from Lemna minor (Common duckweed).